Reading from the N-terminus, the 134-residue chain is Profilin-4 (134 aa).

Cysteine 13 and cysteine 118 are disulfide-bonded. The Involved in PIP2 interaction signature appears at 84–100 (AVIRGKKGSGGITIKKT). A Phosphothreonine modification is found at threonine 114.

It belongs to the profilin family. As to quaternary structure, occurs in many kinds of cells as a complex with monomeric actin in a 1:1 ratio. Phosphorylated by MAP kinases.

It localises to the cytoplasm. Its subcellular location is the cytoskeleton. Functionally, binds to actin and affects the structure of the cytoskeleton. At high concentrations, profilin prevents the polymerization of actin, whereas it enhances it at low concentrations. This chain is Profilin-4, found in Olea europaea (Common olive).